A 452-amino-acid polypeptide reads, in one-letter code: Pup--protein ligase (452 aa).

E9 is a binding site for Mg(2+). Position 53 (R53) interacts with ATP. Y55 serves as a coordination point for Mg(2+). Residue D57 is the Proton acceptor of the active site. A Mg(2+)-binding site is contributed by E63. Residues T66 and W419 each contribute to the ATP site.

It belongs to the Pup ligase/Pup deamidase family. Pup-conjugating enzyme subfamily.

The enzyme catalyses ATP + [prokaryotic ubiquitin-like protein]-L-glutamate + [protein]-L-lysine = ADP + phosphate + N(6)-([prokaryotic ubiquitin-like protein]-gamma-L-glutamyl)-[protein]-L-lysine.. The protein operates within protein degradation; proteasomal Pup-dependent pathway. It participates in protein modification; protein pupylation. In terms of biological role, catalyzes the covalent attachment of the prokaryotic ubiquitin-like protein modifier Pup to the proteasomal substrate proteins, thereby targeting them for proteasomal degradation. This tagging system is termed pupylation. The ligation reaction involves the side-chain carboxylate of the C-terminal glutamate of Pup and the side-chain amino group of a substrate lysine. The chain is Pup--protein ligase from Rhodococcus jostii (strain RHA1).